The primary structure comprises 660 residues: Macrolide export ATP-binding/permease protein MacB (660 aa).

The ABC transporter domain occupies 10–248 (LVLENIVRKF…AKGQALQGKQ (239 aa)). 46–53 (GASGSGKS) is a binding site for ATP. The next 4 membrane-spanning stretches (helical) occupy residues 285–305 (FLTMLGVIIGIAAIIAMVALG), 532–552 (ILTLLVSSIAAISLIVGGIGV), 593–613 (IIGGGVGILFGLSIGGLFVLF), and 625–645 (SIIISLTFSTLIGICFGFSPA).

This sequence belongs to the ABC transporter superfamily. Macrolide exporter (TC 3.A.1.122) family. Homodimer.

The protein resides in the cell inner membrane. Functionally, non-canonical ABC transporter that contains transmembrane domains (TMD), which form a pore in the inner membrane, and an ATP-binding domain (NBD), which is responsible for energy generation. Confers resistance against macrolides. This Bartonella quintana (strain Toulouse) (Rochalimaea quintana) protein is Macrolide export ATP-binding/permease protein MacB.